The chain runs to 184 residues: ATP synthase subunit b, chloroplastic (184 aa).

Residues 27 to 49 traverse the membrane as a helical segment; it reads LATNLINLSVVLGVLVFFGKGVL.

Belongs to the ATPase B chain family. In terms of assembly, F-type ATPases have 2 components, F(1) - the catalytic core - and F(0) - the membrane proton channel. F(1) has five subunits: alpha(3), beta(3), gamma(1), delta(1), epsilon(1). F(0) has four main subunits: a(1), b(1), b'(1) and c(10-14). The alpha and beta chains form an alternating ring which encloses part of the gamma chain. F(1) is attached to F(0) by a central stalk formed by the gamma and epsilon chains, while a peripheral stalk is formed by the delta, b and b' chains.

It localises to the plastid. It is found in the chloroplast thylakoid membrane. Functionally, f(1)F(0) ATP synthase produces ATP from ADP in the presence of a proton or sodium gradient. F-type ATPases consist of two structural domains, F(1) containing the extramembraneous catalytic core and F(0) containing the membrane proton channel, linked together by a central stalk and a peripheral stalk. During catalysis, ATP synthesis in the catalytic domain of F(1) is coupled via a rotary mechanism of the central stalk subunits to proton translocation. Its function is as follows. Component of the F(0) channel, it forms part of the peripheral stalk, linking F(1) to F(0). In Cicer arietinum (Chickpea), this protein is ATP synthase subunit b, chloroplastic.